Reading from the N-terminus, the 100-residue chain is Aspartyl/glutamyl-tRNA(Asn/Gln) amidotransferase subunit C (100 aa).

It belongs to the GatC family. Heterotrimer of A, B and C subunits.

It catalyses the reaction L-glutamyl-tRNA(Gln) + L-glutamine + ATP + H2O = L-glutaminyl-tRNA(Gln) + L-glutamate + ADP + phosphate + H(+). The catalysed reaction is L-aspartyl-tRNA(Asn) + L-glutamine + ATP + H2O = L-asparaginyl-tRNA(Asn) + L-glutamate + ADP + phosphate + 2 H(+). Allows the formation of correctly charged Asn-tRNA(Asn) or Gln-tRNA(Gln) through the transamidation of misacylated Asp-tRNA(Asn) or Glu-tRNA(Gln) in organisms which lack either or both of asparaginyl-tRNA or glutaminyl-tRNA synthetases. The reaction takes place in the presence of glutamine and ATP through an activated phospho-Asp-tRNA(Asn) or phospho-Glu-tRNA(Gln). In Streptococcus pyogenes serotype M49 (strain NZ131), this protein is Aspartyl/glutamyl-tRNA(Asn/Gln) amidotransferase subunit C.